Consider the following 92-residue polypeptide: Small ribosomal subunit protein uS19 (92 aa).

The protein belongs to the universal ribosomal protein uS19 family.

Protein S19 forms a complex with S13 that binds strongly to the 16S ribosomal RNA. This Borrelia hermsii (strain HS1 / DAH) protein is Small ribosomal subunit protein uS19.